The following is a 300-amino-acid chain: Transcription factor E2F5 (300 aa).

A DNA-binding region spans residues 2 to 73 (GSSRHEKSLG…KNSIQWKGVG (72 aa)). A leucine-zipper region spans residues 31–53 (LKAAADTLAVRQKRRIYDITNVL). A DEF box motif is present at residues 36-73 (DTLAVRQKRRIYDITNVLEGIDLIEKKSKNSIQWKGVG). The dimerization stretch occupies residues 74-170 (AGCNTKEVID…GQNGQKKYQI (97 aa)). The interval 191–250 (SKPVVFPVPPPDDLTQPSSQSSTSVTPPKSTMAAQNLPEQHVSERSQNFQQTPATEISSG) is disordered. Low complexity predominate over residues 203-221 (DLTQPSSQSSTSVTPPKST). A compositionally biased stretch (polar residues) spans 235–246 (RSQNFQQTPATE). The transactivation stretch occupies residues 242–300 (TPATEISSGSISGDIIDELMSSDVFPLLRLSPTPADDYNFNLDDNEGVCDLFDVQILNY). The interval 277–294 (DDYNFNLDDNEGVCDLFD) is RBL2 association.

The protein belongs to the E2F/DP family. As to quaternary structure, component of the DRTF1/E2F transcription factor complex. Binds cooperatively with DP-1 to E2F sites. Interaction with retinoblastoma protein RB1 or proteins RBL1 and RBL2 inhibits the E2F transactivation domain. Component of the DREAM complex (also named LINC complex) at least composed of E2F4, E2F5, LIN9, LIN37, LIN52, LIN54, MYBL1, MYBL2, RBL1, RBL2, RBBP4, TFDP1 and TFDP2. The complex exists in quiescent cells where it represses cell cycle-dependent genes. It dissociates in S phase when LIN9, LIN37, LIN52 and LIN54 form a subcomplex that binds to MYBL2. As to expression, found in placenta followed by kidney, lung and brain.

It is found in the nucleus. In terms of biological role, transcriptional activator that binds to E2F sites, these sites are present in the promoter of many genes whose products are involved in cell proliferation. May mediate growth factor-initiated signal transduction. It is likely involved in the early responses of resting cells to growth factor stimulation. Specifically required for multiciliate cell differentiation: together with MCIDAS and E2F5, binds and activate genes required for centriole biogenesis. In Rattus norvegicus (Rat), this protein is Transcription factor E2F5 (E2f5).